Here is a 245-residue protein sequence, read N- to C-terminus: 5-oxoprolinase subunit A (245 aa).

The protein belongs to the LamB/PxpA family. In terms of assembly, forms a complex composed of PxpA, PxpB and PxpC.

It catalyses the reaction 5-oxo-L-proline + ATP + 2 H2O = L-glutamate + ADP + phosphate + H(+). In terms of biological role, catalyzes the cleavage of 5-oxoproline to form L-glutamate coupled to the hydrolysis of ATP to ADP and inorganic phosphate. The chain is 5-oxoprolinase subunit A from Neisseria meningitidis serogroup C (strain 053442).